A 625-amino-acid chain; its full sequence is Enolase 4 (625 aa).

The interval 184-226 (YSTVPTPLPPVPPPPPPPPPTKKKGQKPGRKDTITEKPIAPAE) is disordered. Positions 189 to 203 (TPLPPVPPPPPPPPP) are enriched in pro residues. Valine 300 serves as a coordination point for substrate. The interval 331 to 350 (PSPPKAETKKGHDGSKRGQQ) is disordered. Positions 336 to 346 (AETKKGHDGSK) are enriched in basic and acidic residues. Catalysis depends on asparagine 497, which acts as the Proton acceptor. Substrate is bound at residue glycine 548. Residues 604-625 (PLVPTFPTQGVEESAETGASSG) form a disordered region.

This sequence belongs to the enolase family. In terms of assembly, interacts with ENO1 and AKAP4. Post-translationally, synthesized as an approximately 70-kDa precursor, which then undergoes proteolytic cleavage to an approximately 60-kDa enzyme; HOATZ associates directly or indirectly with ENO4 to mediate this process before its transport to mature flagella.

The enzyme catalyses (2R)-2-phosphoglycerate = phosphoenolpyruvate + H2O. The protein operates within carbohydrate degradation; glycolysis; pyruvate from D-glyceraldehyde 3-phosphate: step 4/5. Its function is as follows. May be required for sperm motility and function. This Homo sapiens (Human) protein is Enolase 4.